Consider the following 137-residue polypeptide: Small ribosomal subunit protein uS9 (137 aa).

Positions 105-117 (LKIEGHLSRDPRA) are enriched in basic and acidic residues. The segment at 105–137 (LKIEGHLSRDPRAKERRKYGLKKARKAPQFSKR) is disordered. Residues 118–137 (KERRKYGLKKARKAPQFSKR) show a composition bias toward basic residues.

This sequence belongs to the universal ribosomal protein uS9 family.

The chain is Small ribosomal subunit protein uS9 from Prochlorococcus marinus (strain MIT 9211).